The sequence spans 248 residues: 5'-nucleotidase SurE (248 aa).

Residues D8, D9, S39, and N91 each contribute to the a divalent metal cation site.

The protein belongs to the SurE nucleotidase family. A divalent metal cation serves as cofactor.

It localises to the cytoplasm. It catalyses the reaction a ribonucleoside 5'-phosphate + H2O = a ribonucleoside + phosphate. Its function is as follows. Nucleotidase that shows phosphatase activity on nucleoside 5'-monophosphates. The chain is 5'-nucleotidase SurE from Neisseria meningitidis serogroup A / serotype 4A (strain DSM 15465 / Z2491).